Reading from the N-terminus, the 230-residue chain is tRNA (guanine-N(7)-)-methyltransferase (230 aa).

Residues E61, E86, N113, and D136 each contribute to the S-adenosyl-L-methionine site. Residue D136 is part of the active site. Residues K140, D172, and 208 to 211 (TKYE) contribute to the substrate site.

The protein belongs to the class I-like SAM-binding methyltransferase superfamily. TrmB family.

The enzyme catalyses guanosine(46) in tRNA + S-adenosyl-L-methionine = N(7)-methylguanosine(46) in tRNA + S-adenosyl-L-homocysteine. It participates in tRNA modification; N(7)-methylguanine-tRNA biosynthesis. In terms of biological role, catalyzes the formation of N(7)-methylguanine at position 46 (m7G46) in tRNA. This Mycobacterium leprae (strain Br4923) protein is tRNA (guanine-N(7)-)-methyltransferase.